We begin with the raw amino-acid sequence, 136 residues long: Large ribosomal subunit protein uL16 (136 aa).

Belongs to the universal ribosomal protein uL16 family. Part of the 50S ribosomal subunit.

In terms of biological role, binds 23S rRNA and is also seen to make contacts with the A and possibly P site tRNAs. This is Large ribosomal subunit protein uL16 from Bradyrhizobium diazoefficiens (strain JCM 10833 / BCRC 13528 / IAM 13628 / NBRC 14792 / USDA 110).